The chain runs to 660 residues: MRTEQADDVLVLENIVRKFSAGETFVTVLKDINLTIKRGEMVAIVGASGSGKSTLMNILGCLDRPSSGRYWISGKKTACLSADELSALRRNHFGFIFQRYHLLSELTALGNVEIPAIYAGCSPQIRKKRAQDLLIRLGMGDRINHRPNQLSGGQQQRVSIARALMNNAEVILADEPTGALDKKSGQEVLRILDELHQEGRTIVIVTHDMQVAERAERIIEISDGEIIADNVAKVAKTKAKGQALQGKQNPKNQKTLGFFRSFAERFREAFVMALLAMNAHRMRTFLTMLGVIIGIAAIIAMVALGTGTREKILENFKSLGSNTLTILPGKSLSDPQSDKITSLVEADAEALSRLPYVSGVTPQVSASSTVRFGAVEVDAVIVGVGEQFFQTQGLNAVQGRLFDQKSVRDRAVDLVIEKEALSVLFPHSRESPVGKVVQVGQVPARIVGVIDQQHNGGMSNTLQVYLPYTTVQTRFVGTTQVRAITVKIADDIDSHLAESMVRRFLIMRHGEEDFFIRNSQLFRDRIMESTHILTLLVSSIAAISLIVGGIGVMNIMLVTVSERINEIGVRMAVGARQSDILQQFLIEAILVCIIGGGVGILFGLSIGGLFVLFEAPIHLIYTIDSIIISLTFSTLIGICFGFSPARQASRLDPVVALSRD.

The 239-residue stretch at 10-248 (LVLENIVRKF…AKGQALQGKQ (239 aa)) folds into the ABC transporter domain. An ATP-binding site is contributed by 46-53 (GASGSGKS). 4 consecutive transmembrane segments (helical) span residues 285–305 (FLTM…VALG), 532–552 (ILTL…GIGV), 593–613 (IIGG…FVLF), and 625–645 (SIII…FSPA).

The protein belongs to the ABC transporter superfamily. Macrolide exporter (TC 3.A.1.122) family. In terms of assembly, homodimer.

It localises to the cell inner membrane. Its function is as follows. Non-canonical ABC transporter that contains transmembrane domains (TMD), which form a pore in the inner membrane, and an ATP-binding domain (NBD), which is responsible for energy generation. Confers resistance against macrolides. This chain is Macrolide export ATP-binding/permease protein MacB, found in Bartonella quintana (strain Toulouse) (Rochalimaea quintana).